Reading from the N-terminus, the 241-residue chain is Zinc finger CCHC domain-containing protein 17 (241 aa).

One can recognise an S1 motif domain in the interval 16-88 (YTIFQGEVAM…DRIKVSLSMK (73 aa)). Ser114 is subject to Phosphoserine. The segment at 131 to 148 (TTCKKCGCKGHFAKDCFM) adopts a CCHC-type zinc-finger fold. Position 144 is an N6-acetyllysine (Lys144). Residues 160-241 (EEEEEKEEAK…KKKHKKKHKE (82 aa)) are disordered. Basic and acidic residues predominate over residues 166–178 (EEAKAEGLEKPDP). Over residues 182 to 198 (SSRKRKKEKKKKKHRDR) the composition is skewed to basic residues. The residue at position 183 (Ser183) is a Phosphoserine. Residues 211–225 (DTGKKARHSSKDSKA) show a composition bias toward basic and acidic residues. The segment covering 226-241 (TKKKKKKKKHKKKHKE) has biased composition (basic residues).

Interacts with PNN. Associates with the 60S ribosomal subunit. As to expression, expressed in liver, brain, heart, kidney testis, stomach, small intestine, skin, thymus, uterus, placenta, spleen, lung and skeletal muscle.

The protein resides in the nucleus. It localises to the nucleolus. The polypeptide is Zinc finger CCHC domain-containing protein 17 (Zcchc17) (Mus musculus (Mouse)).